The sequence spans 292 residues: ATP phosphoribosyltransferase (292 aa).

It belongs to the ATP phosphoribosyltransferase family. Long subfamily. It depends on Mg(2+) as a cofactor.

It is found in the cytoplasm. The enzyme catalyses 1-(5-phospho-beta-D-ribosyl)-ATP + diphosphate = 5-phospho-alpha-D-ribose 1-diphosphate + ATP. It functions in the pathway amino-acid biosynthesis; L-histidine biosynthesis; L-histidine from 5-phospho-alpha-D-ribose 1-diphosphate: step 1/9. Feedback inhibited by histidine. Catalyzes the condensation of ATP and 5-phosphoribose 1-diphosphate to form N'-(5'-phosphoribosyl)-ATP (PR-ATP). Has a crucial role in the pathway because the rate of histidine biosynthesis seems to be controlled primarily by regulation of HisG enzymatic activity. This Gemmatimonas aurantiaca (strain DSM 14586 / JCM 11422 / NBRC 100505 / T-27) protein is ATP phosphoribosyltransferase.